Consider the following 497-residue polypeptide: Histidine--tRNA ligase (497 aa).

Belongs to the class-II aminoacyl-tRNA synthetase family. As to quaternary structure, homodimer.

Its subcellular location is the cytoplasm. It carries out the reaction tRNA(His) + L-histidine + ATP = L-histidyl-tRNA(His) + AMP + diphosphate + H(+). This is Histidine--tRNA ligase from Dinoroseobacter shibae (strain DSM 16493 / NCIMB 14021 / DFL 12).